The primary structure comprises 703 residues: Elongation factor G (703 aa).

One can recognise a tr-type G domain in the interval 9–292 (ERTRNIGIMA…AVVDYLPGPL (284 aa)). GTP is bound by residues 18–25 (AHIDAGKT), 91–95 (DTPGH), and 145–148 (NKMD).

The protein belongs to the TRAFAC class translation factor GTPase superfamily. Classic translation factor GTPase family. EF-G/EF-2 subfamily.

It is found in the cytoplasm. Catalyzes the GTP-dependent ribosomal translocation step during translation elongation. During this step, the ribosome changes from the pre-translocational (PRE) to the post-translocational (POST) state as the newly formed A-site-bound peptidyl-tRNA and P-site-bound deacylated tRNA move to the P and E sites, respectively. Catalyzes the coordinated movement of the two tRNA molecules, the mRNA and conformational changes in the ribosome. The sequence is that of Elongation factor G from Leuconostoc citreum (strain KM20).